The primary structure comprises 294 residues: Pyridoxal 5'-phosphate synthase subunit PdxS (294 aa).

Asp24 contacts D-ribose 5-phosphate. The active-site Schiff-base intermediate with D-ribose 5-phosphate is Lys81. Gly153 lines the D-ribose 5-phosphate pocket. Arg165 is a binding site for D-glyceraldehyde 3-phosphate. D-ribose 5-phosphate-binding positions include Gly214 and Gly235–Ser236.

The protein belongs to the PdxS/SNZ family. In terms of assembly, in the presence of PdxT, forms a dodecamer of heterodimers.

The catalysed reaction is aldehydo-D-ribose 5-phosphate + D-glyceraldehyde 3-phosphate + L-glutamine = pyridoxal 5'-phosphate + L-glutamate + phosphate + 3 H2O + H(+). Its pathway is cofactor biosynthesis; pyridoxal 5'-phosphate biosynthesis. Catalyzes the formation of pyridoxal 5'-phosphate from ribose 5-phosphate (RBP), glyceraldehyde 3-phosphate (G3P) and ammonia. The ammonia is provided by the PdxT subunit. Can also use ribulose 5-phosphate and dihydroxyacetone phosphate as substrates, resulting from enzyme-catalyzed isomerization of RBP and G3P, respectively. The sequence is that of Pyridoxal 5'-phosphate synthase subunit PdxS from Bacillus licheniformis (strain ATCC 14580 / DSM 13 / JCM 2505 / CCUG 7422 / NBRC 12200 / NCIMB 9375 / NCTC 10341 / NRRL NRS-1264 / Gibson 46).